Here is a 276-residue protein sequence, read N- to C-terminus: Protein HemX (276 aa).

The next 8 helical transmembrane spans lie at 9-29 (LNEGTIVIYALSVLFYFIDFL), 40-60 (FWLLSIVWTLQTVYLAYFMWV), 66-86 (VLNVTEALYFYAWVLVTLSLV), 93-113 (VDFIVFFTNVIGFSMIAIHTF), 132-152 (LVIHITMAILSYGAFSLSFVF), 187-207 (VLNVIGVPMLLLSLILGVIWA), 217-237 (FDAKVLGSFVVLLLYSYYLYI), and 247-267 (VAALWNTACFLVLMINYFLLG).

This sequence to M.leprae U1620K.

The protein resides in the cell membrane. Functionally, required for HemL synthesis. This chain is Protein HemX (hemX), found in Bacillus subtilis (strain 168).